The sequence spans 291 residues: MNIRGAPDLGQPSDDPNSGGERERIRQRMKMVIGQLEGILRELKEVAKELREVVSQIDKLTSDFDFELEPDDWTTATVSSTSSSDKAGAGGPFDLGHLDFMTADILSDSWEFCSFLDVSTPSDSVDGPEAPRPGTGPDYQLMNGGLPIPNGPRVETPDSSSEEAFSAGPAKGQVPQRTPGTRERVRFSDKVLYHALCCDDEEGDGEEVEEEEAGLAPELPRVEPHTGPLKPSPAPYKTKRSPLTTRRLGPTLAPEQTRRVTRNSSTQTVSDKSTQTVLPYTATKQKAKGKN.

The interval 1–25 (MNIRGAPDLGQPSDDPNSGGERERI) is disordered. Positions 30–63 (KMVIGQLEGILRELKEVAKELREVVSQIDKLTSD) form a coiled coil. Disordered regions lie at residues 120 to 186 (TPSD…ERVR) and 201 to 291 (EEGD…KGKN). Acidic residues predominate over residues 201–213 (EEGDGEEVEEEEA). Residues 262–284 (RNSSTQTVSDKSTQTVLPYTATK) show a composition bias toward polar residues.

The protein belongs to the INSYN1 family. Interacts with GPHN.

It localises to the postsynaptic density. Its function is as follows. Component of the protein machinery at the inhibitory synapses, probably acting as a scaffold. Inhibitory synapses dampen neuronal activity through postsynaptic hyperpolarization. This synaptic inhibition is fundamental for the functioning of the central nervous system, shaping and orchestrating the flow of information through neuronal networks to generate a precise neural code. In Rattus norvegicus (Rat), this protein is Inhibitory synaptic factor 1 (Insyn1).